Here is a 381-residue protein sequence, read N- to C-terminus: V-type proton ATPase subunit C 1-B (381 aa).

Thr-2 is modified (N-acetylthreonine).

Belongs to the V-ATPase C subunit family. In terms of assembly, V-ATPase is a heteromultimeric enzyme made up of two complexes: the ATP-hydrolytic V1 complex and the proton translocation V0 complex. The V1 complex consists of three catalytic AB heterodimers that form a heterohexamer, three peripheral stalks each consisting of EG heterodimers, one central rotor including subunits D and F, and the regulatory subunits C and H. The proton translocation complex V0 consists of the proton transport subunit a, a ring of proteolipid subunits c9c'', rotary subunit d, subunits e and f, and two accessory subunits.

Its function is as follows. Subunit of the V1 complex of vacuolar(H+)-ATPase (V-ATPase), a multisubunit enzyme composed of a peripheral complex (V1) that hydrolyzes ATP and a membrane integral complex (V0) that translocates protons. V-ATPase is responsible for acidifying and maintaining the pH of intracellular compartments and in some cell types, is targeted to the plasma membrane, where it is responsible for acidifying the extracellular environment. Subunit C is necessary for the assembly of the catalytic sector of the enzyme and is likely to have a specific function in its catalytic activity. This is V-type proton ATPase subunit C 1-B (atp6v1c1b) from Danio rerio (Zebrafish).